A 186-amino-acid polypeptide reads, in one-letter code: Large ribosomal subunit protein eL18B (186 aa).

The residue at position 50 (lysine 50) is an N6,N6,N6-trimethyllysine. A Glycyl lysine isopeptide (Lys-Gly) (interchain with G-Cter in ubiquitin) cross-link involves residue lysine 116.

The protein belongs to the eukaryotic ribosomal protein eL18 family. Component of the large ribosomal subunit (LSU). Mature yeast ribosomes consist of a small (40S) and a large (60S) subunit. The 40S small subunit contains 1 molecule of ribosomal RNA (18S rRNA) and 33 different proteins (encoded by 57 genes). The large 60S subunit contains 3 rRNA molecules (25S, 5.8S and 5S rRNA) and 46 different proteins (encoded by 81 genes). eL18 interacts with NAP1.

Its subcellular location is the cytoplasm. Its function is as follows. Component of the ribosome, a large ribonucleoprotein complex responsible for the synthesis of proteins in the cell. The small ribosomal subunit (SSU) binds messenger RNAs (mRNAs) and translates the encoded message by selecting cognate aminoacyl-transfer RNA (tRNA) molecules. The large subunit (LSU) contains the ribosomal catalytic site termed the peptidyl transferase center (PTC), which catalyzes the formation of peptide bonds, thereby polymerizing the amino acids delivered by tRNAs into a polypeptide chain. The nascent polypeptides leave the ribosome through a tunnel in the LSU and interact with protein factors that function in enzymatic processing, targeting, and the membrane insertion of nascent chains at the exit of the ribosomal tunnel. The polypeptide is Large ribosomal subunit protein eL18B (Saccharomyces cerevisiae (strain ATCC 204508 / S288c) (Baker's yeast)).